The following is a 440-amino-acid chain: Xylose isomerase (440 aa).

Active-site residues include His99 and Asp102. The Mg(2+) site is built by Glu230, Glu266, His269, Asp294, Asp305, Asp307, and Asp337.

Belongs to the xylose isomerase family. As to quaternary structure, homotetramer. Requires Mg(2+) as cofactor.

The protein resides in the cytoplasm. It catalyses the reaction alpha-D-xylose = alpha-D-xylulofuranose. The protein is Xylose isomerase of Halalkalibacterium halodurans (strain ATCC BAA-125 / DSM 18197 / FERM 7344 / JCM 9153 / C-125) (Bacillus halodurans).